A 174-amino-acid polypeptide reads, in one-letter code: RNA pyrophosphohydrolase (174 aa).

One can recognise a Nudix hydrolase domain in the interval 6–149 (GYRPNVGIVI…KRDVYRRALK (144 aa)). Positions 38–59 (GGIDEGETPEQAMYRELYEEVG) match the Nudix box motif.

The protein belongs to the Nudix hydrolase family. RppH subfamily. A divalent metal cation is required as a cofactor.

Functionally, accelerates the degradation of transcripts by removing pyrophosphate from the 5'-end of triphosphorylated RNA, leading to a more labile monophosphorylated state that can stimulate subsequent ribonuclease cleavage. This chain is RNA pyrophosphohydrolase, found in Photobacterium profundum (strain SS9).